Here is a 228-residue protein sequence, read N- to C-terminus: Cytidylate kinase (228 aa).

12–20 (GPSGAGKGT) provides a ligand contact to ATP.

Belongs to the cytidylate kinase family. Type 1 subfamily.

It localises to the cytoplasm. The enzyme catalyses CMP + ATP = CDP + ADP. It carries out the reaction dCMP + ATP = dCDP + ADP. This Photobacterium profundum (strain SS9) protein is Cytidylate kinase.